Consider the following 186-residue polypeptide: Ribosome-recycling factor (186 aa).

The protein belongs to the RRF family.

The protein resides in the cytoplasm. Its function is as follows. Responsible for the release of ribosomes from messenger RNA at the termination of protein biosynthesis. May increase the efficiency of translation by recycling ribosomes from one round of translation to another. The protein is Ribosome-recycling factor of Bartonella henselae (strain ATCC 49882 / DSM 28221 / CCUG 30454 / Houston 1) (Rochalimaea henselae).